The chain runs to 845 residues: MQVTSLLILVCFIAAFQVFSRASSPVNCKWDSYGPWSECNGCTKTQTRRRSVAVYGQYGGYPCEGSAFETQSCKPERGCPTEEGCGDRFRCFSGQCISKSLVCNGDPDCEEDGADEDKCENVANPSCNIDKPPPNIELTGYGYNVVTGQGKKRVINTKSFGGQCRKVFSGDGKDFYRLSGNILSYTFQVKVDNDFNYEFYNSSWSYIKHTSTEQNTFYSWKGLFSHSRNTYGHGSAKEEIDTKMKSYKLLVVQNTVEVAQFTNNNPEFLQVAEPFWKELSHLPTLYDYSAYRRLIDQYGTHYLQSGSLGGEYRVLFYVDSGSAKETGFQSDQDNACSSADFQFLFTSSADQRCMKQLETEKSTSGNKGRLLRGKPLVRGGDSGFVADLSFLDLDNPAGNKQRYSSWAGSVTRLPQVIKEKLAPLYELVKEVPCASVKRLYLKRAIEEYFDEFDPCHCRPCQNGGLAIVVETQCQCLCKPYTFGSACEQGVLVGDQAGGVDGGWNCWSSWSPCVQGKRTRSRECNNPPPRDDGKSCLGETTESKQCEDQDLEKLRLLEPHCFHSSLAPKEFCLSPPALKDGFVQGEGTMVPVGQSVVYACDEGYSLIGDPVARCGEDLQWLVGEMHCQKLACVLPGEMNGMQSHPQKPFYMVGEKVTLSCVGGMSLEGPSTLLCGSSLKWSPELKDAKCVQKATSTPPPAAPACQPWEKLQNSKCICKMPYECGSSLDVCARDESRNKILSLTICKMHVVHCHKRNYTLVGKESCTLPSPAEKVCGACPIWSKCDAQNGKCICREASECQTAGYRICVEVNGKEETMSECEAGILRCRGQSISITAIKPCAEEAAQ.

The first 22 residues, 1–22 (MQVTSLLILVCFIAAFQVFSRA), serve as a signal peptide directing secretion. The 54-residue stretch at 27–80 (NCKWDSYGPWSECNGCTKTQTRRRSVAVYGQYGGYPCEGSAFETQSCKPERGCP) folds into the TSP type-1 1 domain. 6 disulfide bridges follow: cysteine 28–cysteine 63, cysteine 39–cysteine 73, cysteine 42–cysteine 79, cysteine 85–cysteine 96, cysteine 91–cysteine 109, and cysteine 103–cysteine 119. Residues 84-120 (GCGDRFRCFSGQCISKSLVCNGDPDCEEDGADEDKCE) enclose the LDL-receptor class A domain. The MACPF domain occupies 122-456 (VANPSCNIDK…EYFDEFDPCH (335 aa)). N-linked (GlcNAc...) asparagine glycosylation is present at asparagine 124. Cysteine 127 and cysteine 164 are disulfide-bonded. An N-linked (GlcNAc...) asparagine glycan is attached at asparagine 201. 21 disulfide bridges follow: cysteine 336/cysteine 353, cysteine 433/cysteine 560, cysteine 455/cysteine 505, cysteine 457/cysteine 473, cysteine 460/cysteine 475, cysteine 477/cysteine 486, cysteine 512/cysteine 545, cysteine 523/cysteine 535, cysteine 571/cysteine 613, cysteine 599/cysteine 626, cysteine 631/cysteine 673, cysteine 659/cysteine 688, cysteine 703/cysteine 714, cysteine 716/cysteine 751, cysteine 722/cysteine 744, cysteine 729/cysteine 764, cysteine 774/cysteine 783, cysteine 777/cysteine 790, cysteine 792/cysteine 826, cysteine 798/cysteine 819, and cysteine 806/cysteine 839. The region spanning 457 to 487 (CRPCQNGGLAIVVETQCQCLCKPYTFGSACE) is the EGF-like domain. The TSP type-1 2 domain maps to 500–549 (DGGWNCWSSWSPCVQGKRTRSRECNNPPPRDDGKSCLGETTESKQCEDQD). CCP regions lie at residues 545–615 (CEDQ…RCGE) and 616–693 (DLQW…QKAT). Sushi domains lie at 569-628 (EFCL…HCQK) and 629-690 (LACV…KCVQ). Factor I module (FIM) regions lie at residues 695-771 (TPPP…SPAE) and 772-844 (KVCG…EEAA). N-linked (GlcNAc...) asparagine glycosylation occurs at asparagine 755.

The protein belongs to the complement C6/C7/C8/C9 family. Monomer or dimer; as a C5b-7 complex it can also form multimeric rosettes. Component of the membrane attack complex (MAC), composed of complement C5b, C6, C7, C8A, C8B, C8G and multiple copies of the pore-forming subunit C9. In terms of processing, C-, N- and O-glycosylated. O-glycosylated with core 1 or possibly core 8 glycans.

The protein localises to the secreted. It localises to the target cell membrane. With respect to regulation, membrane attack complex (MAC) assembly is inhibited by CD59, thereby protecting self-cells from damage during complement activation. MAC assembly is also inhibited by clusterin (CLU) chaperones that inhibit polymerization of C9. Its function is as follows. Component of the membrane attack complex (MAC), a multiprotein complex activated by the complement cascade, which inserts into a target cell membrane and forms a pore, leading to target cell membrane rupture and cell lysis. The MAC is initiated by proteolytic cleavage of C5 into complement C5b in response to the classical, alternative, lectin and GZMK complement pathways. The complement pathways consist in a cascade of proteins that leads to phagocytosis and breakdown of pathogens and signaling that strengthens the adaptive immune system. C7 serves as a membrane anchor. During MAC assembly, associates with C5b and C6 to form the C5b-7 complex, a key lipophilic precursor of the MAC complex, which associates with the outer leaflet and reduces the energy for membrane bending. The sequence is that of Complement component C7 from Mus musculus (Mouse).